Here is a 291-residue protein sequence, read N- to C-terminus: ATP synthase gamma chain (291 aa).

Belongs to the ATPase gamma chain family. As to quaternary structure, F-type ATPases have 2 components, CF(1) - the catalytic core - and CF(0) - the membrane proton channel. CF(1) has five subunits: alpha(3), beta(3), gamma(1), delta(1), epsilon(1). CF(0) has three main subunits: a, b and c.

The protein resides in the cell inner membrane. Its function is as follows. Produces ATP from ADP in the presence of a proton gradient across the membrane. The gamma chain is believed to be important in regulating ATPase activity and the flow of protons through the CF(0) complex. In Nitratidesulfovibrio vulgaris (strain ATCC 29579 / DSM 644 / CCUG 34227 / NCIMB 8303 / VKM B-1760 / Hildenborough) (Desulfovibrio vulgaris), this protein is ATP synthase gamma chain.